Reading from the N-terminus, the 626-residue chain is Nuclear receptor subfamily 4 group A member 3 (626 aa).

Residues 1 to 108 (MPCVQAQYSP…HHHHHHHHHH (108 aa)) are activation function (AF)-1 domain. Residues 1-138 (MPCVQAQYSP…PSTSMYFKQS (138 aa)) form a required for DNA-PK heterotrimer region. Residues 1–291 (MPCVQAQYSP…SRSSSSGEGT (291 aa)) form an interaction with NCOA1, NCOA2, NCOA3 and KAT2B region. Disordered stretches follow at residues 92–152 (PSYH…PPQA), 192–211 (HFKPSPPHPPAPSPAGGHHL), and 265–284 (PTASSLLGESPSLPSPPSRS). Basic residues predominate over residues 93–110 (SYHHHHHHHHHHHHHHQQ). 2 stretches are compositionally biased toward pro residues: residues 140 to 149 (PSTPTTPAFP) and 195 to 204 (PSPPHPPAPS). The span at 268–284 (SSLLGESPSLPSPPSRS) shows a compositional bias: low complexity. The nuclear receptor DNA-binding region spans 289–364 (EGTCAVCGDN…VGMVKEVVRT (76 aa)). 2 consecutive NR C4-type zinc fingers follow at residues 292-312 (CAVCGDNAACQHYGVRTCEGC) and 328-352 (CLANKNCPVDKRRRNRCQYCRFQKC). The disordered stretch occupies residues 364–394 (TDSLKGRRGRLPSKPKSPLQQEPSQPSPPSP). The span at 377–387 (KPKSPLQQEPS) shows a compositional bias: low complexity. The tract at residues 379 to 626 (KSPLQQEPSQ…DKLFLDTLPF (248 aa)) is interaction with KAT2B. One can recognise an NR LBD domain in the interval 394–623 (PPICMMNALV…SIIDKLFLDT (230 aa)).

This sequence belongs to the nuclear hormone receptor family. NR4 subfamily. As to quaternary structure, interacts with SIX3 (via homeobox); differentially regulates the transcriptional activities of NR4A3. Interacts with the constituents of DNA-PK heterotrimer PRKDC, XRCC6 and XRCC5; phosphorylates and prevents NR4A3 ubiquitinylation and degradation. Interacts with NCOA2; potentiates the activity of the NR4A3. Interacts with NCOA1, NCOA3, MED1 and KAT2B. Interacts with EP300 and NCOA2; mediates the recruitment of MED1 in the coactivator complex. Interacts with NR3C1 (via nuclear receptor DNA-binding domain); the interactions represses transcription activity of NR4A3 on the POMC promoter Nur response element (NurRE). Interacts with TRIM28; the interactions potentiates NR4A3 activity on NurRE promoter. Binds DNA as a monomer and homodimer. Interacts with PARP1; activates PARP1 by improving acetylation of PARP1 and suppressing the interaction between PARP1 and SIRT1. Post-translationally, phosphorylated by PRKDC. In terms of tissue distribution, isoform alpha is highly expressed in skeletal muscle. Isoform beta is highly expressed in skeletal muscle and low expressed in fetal brain and placenta.

It localises to the nucleus. Its function is as follows. Transcriptional activator that binds to regulatory elements in promoter regions in a cell- and response element (target)-specific manner. Induces gene expression by binding as monomers to the NR4A1 response element (NBRE) 5'-AAAAGGTCA-3' site and as homodimers to the Nur response element (NurRE) site in the promoter of their regulated target genes. Plays a role in the regulation of proliferation, survival and differentiation of many different cell types and also in metabolism and inflammation. Mediates proliferation of vascular smooth muscle, myeloid progenitor cell and type B pancreatic cells; promotes mitogen-induced vascular smooth muscle cell proliferation through transactivation of SKP2 promoter by binding a NBRE site. Upon PDGF stimulation, stimulates vascular smooth muscle cell proliferation by regulating CCND1 and CCND2 expression. In islets, induces type B pancreatic cell proliferation through up-regulation of genes that activate cell cycle, as well as genes that cause degradation of the CDKN1A. Negatively regulates myeloid progenitor cell proliferation by repressing RUNX1 in a NBRE site-independent manner. During inner ear, plays a role as a key mediator of the proliferative growth phase of semicircular canal development. Also mediates survival of neuron and smooth muscle cells; mediates CREB-induced neuronal survival, and during hippocampus development, plays a critical role in pyramidal cell survival and axonal guidance. Is required for S phase entry of the cell cycle and survival of smooth muscle cells by inducing CCND1, resulting in RB1 phosphorylation. Binds to NBRE motif in CCND1 promoter, resulting in the activation of the promoter and CCND1 transcription. Also plays a role in inflammation; upon TNF stimulation, mediates monocyte adhesion by inducing the expression of VCAM1 and ICAM1 by binding to the NBRE consensus site. In mast cells activated by Fc-epsilon receptor cross-linking, promotes the synthesis and release of cytokines but impairs events leading to degranulation. Also plays a role in metabolism; by modulating feeding behavior; and by playing a role in energy balance by inhibiting the glucocorticoid-induced orexigenic neuropeptides AGRP expression, at least in part by forming a complex with activated NR3C1 on the AGRP- glucocorticoid response element (GRE), and thus weakening the DNA binding activity of NR3C1. Upon catecholamines stimulation, regulates gene expression that controls oxidative metabolism in skeletal muscle. Plays a role in glucose transport by regulating translocation of the SLC2A4 glucose transporter to the cell surface. Finally, during gastrulation plays a crucial role in the formation of anterior mesoderm by controlling cell migration. Inhibits adipogenesis. Also participates in cardiac hypertrophy by activating PARP1. The polypeptide is Nuclear receptor subfamily 4 group A member 3 (NR4A3) (Homo sapiens (Human)).